Reading from the N-terminus, the 70-residue chain is Large ribosomal subunit protein bL31 (70 aa).

Zn(2+) is bound by residues Cys-16, Cys-18, Cys-37, and Cys-40.

Belongs to the bacterial ribosomal protein bL31 family. Type A subfamily. In terms of assembly, part of the 50S ribosomal subunit. Zn(2+) serves as cofactor.

Binds the 23S rRNA. The protein is Large ribosomal subunit protein bL31 of Haemophilus influenzae (strain PittEE).